The following is a 486-amino-acid chain: Ribulose bisphosphate carboxylase large chain (486 aa).

2 residues coordinate substrate: N126 and T176. Residue K178 is the Proton acceptor of the active site. Substrate is bound at residue K180. Mg(2+) contacts are provided by K204, D206, and E207. An N6-carboxylysine modification is found at K204. The active-site Proton acceptor is the H296. The substrate site is built by R297, H329, and S381.

Belongs to the RuBisCO large chain family. Type I subfamily. In terms of assembly, heterohexadecamer of 8 large chains and 8 small chains. The cofactor is Mg(2+).

The catalysed reaction is 2 (2R)-3-phosphoglycerate + 2 H(+) = D-ribulose 1,5-bisphosphate + CO2 + H2O. It carries out the reaction D-ribulose 1,5-bisphosphate + O2 = 2-phosphoglycolate + (2R)-3-phosphoglycerate + 2 H(+). RuBisCO catalyzes two reactions: the carboxylation of D-ribulose 1,5-bisphosphate, the primary event in carbon dioxide fixation, as well as the oxidative fragmentation of the pentose substrate. Both reactions occur simultaneously and in competition at the same active site. In Sinorhizobium medicae (strain WSM419) (Ensifer medicae), this protein is Ribulose bisphosphate carboxylase large chain.